Consider the following 85-residue polypeptide: Phosphocarrier protein HPr (85 aa).

The HPr domain occupies 1-85 (MYSKDVEIIA…HLVALIPTLE (85 aa)). The active-site Pros-phosphohistidine intermediate is His-15.

This sequence belongs to the HPr family.

The protein resides in the cytoplasm. General (non sugar-specific) component of the phosphoenolpyruvate-dependent sugar phosphotransferase system (sugar PTS). This major carbohydrate active-transport system catalyzes the phosphorylation of incoming sugar substrates concomitantly with their translocation across the cell membrane. The phosphoryl group from phosphoenolpyruvate (PEP) is transferred to the phosphoryl carrier protein HPr by enzyme I. Phospho-HPr then transfers it to the PTS EIIA domain. This is Phosphocarrier protein HPr (ptsH) from Haemophilus influenzae (strain ATCC 51907 / DSM 11121 / KW20 / Rd).